The sequence spans 356 residues: 4-hydroxybenzoate polyprenyltransferase, mitochondrial (356 aa).

A mitochondrion-targeting transit peptide spans 1–44 (MITRSIGIARRSNSINCIVGSNTSTSYSLDESTKRWISTSTKQP). The next 6 membrane-spanning stretches (helical) occupy residues 71-91 (VDKPIGTWLLYWPCTWSIAMA), 93-113 (PAGQLPSIYMLSLFGAGAFLM), 150-170 (AIGLLAGLLSSSLAILLQLNW), 195-215 (WPQFVLGLTFNWGALLGWCAL), 269-289 (WLSAFGVGTVASLTACGIASD), and 332-352 (IILFSGIVASTLLKEVFQILI).

Belongs to the UbiA prenyltransferase family. The cofactor is Mg(2+).

It localises to the mitochondrion inner membrane. The enzyme catalyses an all-trans-polyprenyl diphosphate + 4-hydroxybenzoate = a 4-hydroxy-3-(all-trans-polyprenyl)benzoate + diphosphate. The protein operates within cofactor biosynthesis; ubiquinone biosynthesis. Catalyzes the prenylation of para-hydroxybenzoate (PHB) with an all-trans polyprenyl group. Mediates the second step in the final reaction sequence of coenzyme Q (CoQ) biosynthesis, which is the condensation of the polyisoprenoid side chain with PHB, generating the first membrane-bound Q intermediate. The protein is 4-hydroxybenzoate polyprenyltransferase, mitochondrial (coq-2) of Caenorhabditis elegans.